A 413-amino-acid polypeptide reads, in one-letter code: Arginine biosynthesis bifunctional protein ArgJ (413 aa).

The substrate site is built by threonine 163, lysine 189, threonine 200, glutamate 286, asparagine 408, and threonine 413. Threonine 200 (nucleophile) is an active-site residue.

This sequence belongs to the ArgJ family. In terms of assembly, heterotetramer of two alpha and two beta chains.

The protein resides in the cytoplasm. It carries out the reaction N(2)-acetyl-L-ornithine + L-glutamate = N-acetyl-L-glutamate + L-ornithine. The catalysed reaction is L-glutamate + acetyl-CoA = N-acetyl-L-glutamate + CoA + H(+). It functions in the pathway amino-acid biosynthesis; L-arginine biosynthesis; L-ornithine and N-acetyl-L-glutamate from L-glutamate and N(2)-acetyl-L-ornithine (cyclic): step 1/1. The protein operates within amino-acid biosynthesis; L-arginine biosynthesis; N(2)-acetyl-L-ornithine from L-glutamate: step 1/4. Its function is as follows. Catalyzes two activities which are involved in the cyclic version of arginine biosynthesis: the synthesis of N-acetylglutamate from glutamate and acetyl-CoA as the acetyl donor, and of ornithine by transacetylation between N(2)-acetylornithine and glutamate. The protein is Arginine biosynthesis bifunctional protein ArgJ of Staphylococcus aureus (strain COL).